Consider the following 167-residue polypeptide: Gametocyte-specific factor 1 (167 aa).

2 CHHC U11-48K-type zinc fingers span residues 14-41 (LLQCPYDKNHQIRACRFPYHLIKCRKNH) and 48-75 (LATCPFNARHQVPRAEISHHISSCDDKS). Zn(2+) contacts are provided by Cys17, His23, His33, Cys37, Cys51, His57, His67, and Cys71.

This sequence belongs to the UPF0224 (FAM112) family.

Its subcellular location is the cytoplasm. Required for spermatogenesis and is involved in the suppression of retrotransposon transcription in male germ cells. The sequence is that of Gametocyte-specific factor 1 (GTSF1) from Bos taurus (Bovine).